The sequence spans 441 residues: Tol-Pal system protein TolB (441 aa).

The first 25 residues, Met-1–Ala-25, serve as a signal peptide directing secretion.

This sequence belongs to the TolB family. The Tol-Pal system is composed of five core proteins: the inner membrane proteins TolA, TolQ and TolR, the periplasmic protein TolB and the outer membrane protein Pal. They form a network linking the inner and outer membranes and the peptidoglycan layer.

The protein resides in the periplasm. Its function is as follows. Part of the Tol-Pal system, which plays a role in outer membrane invagination during cell division and is important for maintaining outer membrane integrity. This chain is Tol-Pal system protein TolB, found in Anaplasma marginale (strain St. Maries).